The following is a 293-amino-acid chain: 4-hydroxy-tetrahydrodipicolinate synthase (293 aa).

Thr-47 provides a ligand contact to pyruvate. The active-site Proton donor/acceptor is Tyr-135. Lys-164 acts as the Schiff-base intermediate with substrate in catalysis. Ile-206 is a pyruvate binding site.

It belongs to the DapA family. As to quaternary structure, homotetramer; dimer of dimers.

It is found in the cytoplasm. It carries out the reaction L-aspartate 4-semialdehyde + pyruvate = (2S,4S)-4-hydroxy-2,3,4,5-tetrahydrodipicolinate + H2O + H(+). The protein operates within amino-acid biosynthesis; L-lysine biosynthesis via DAP pathway; (S)-tetrahydrodipicolinate from L-aspartate: step 3/4. In terms of biological role, catalyzes the condensation of (S)-aspartate-beta-semialdehyde [(S)-ASA] and pyruvate to 4-hydroxy-tetrahydrodipicolinate (HTPA). The chain is 4-hydroxy-tetrahydrodipicolinate synthase from Flavobacterium psychrophilum (strain ATCC 49511 / DSM 21280 / CIP 103535 / JIP02/86).